Reading from the N-terminus, the 396-residue chain is Tryptophan synthase beta chain (396 aa).

Lys-86 is subject to N6-(pyridoxal phosphate)lysine.

The protein belongs to the TrpB family. In terms of assembly, tetramer of two alpha and two beta chains. Pyridoxal 5'-phosphate serves as cofactor.

The enzyme catalyses (1S,2R)-1-C-(indol-3-yl)glycerol 3-phosphate + L-serine = D-glyceraldehyde 3-phosphate + L-tryptophan + H2O. It participates in amino-acid biosynthesis; L-tryptophan biosynthesis; L-tryptophan from chorismate: step 5/5. The beta subunit is responsible for the synthesis of L-tryptophan from indole and L-serine. This Vibrio cholerae serotype O1 (strain ATCC 39315 / El Tor Inaba N16961) protein is Tryptophan synthase beta chain.